We begin with the raw amino-acid sequence, 439 residues long: C4-dicarboxylate transport protein 1 (439 aa).

Helical transmembrane passes span 18–38, 56–76, 91–111, 157–177, 193–213, and 231–251; these read VLYI…WLWP, LIKM…IAHV, IYFE…ANVI, GEIL…MSLG, AIFG…FGAM, and LIAT…GIIA.

It belongs to the dicarboxylate/amino acid:cation symporter (DAACS) (TC 2.A.23) family.

The protein localises to the cell inner membrane. Its function is as follows. Responsible for the transport of dicarboxylates such as succinate, fumarate, and malate from the periplasm across the membrane. The protein is C4-dicarboxylate transport protein 1 of Bradyrhizobium sp. (strain ORS 278).